The primary structure comprises 242 residues: Biosynthetic peptidoglycan transglycosylase (242 aa).

A helical transmembrane segment spans residues 19-39; the sequence is LMVVLAVFWGGGIALFSVAPV.

The protein belongs to the glycosyltransferase 51 family.

It is found in the cell inner membrane. The catalysed reaction is [GlcNAc-(1-&gt;4)-Mur2Ac(oyl-L-Ala-gamma-D-Glu-L-Lys-D-Ala-D-Ala)](n)-di-trans,octa-cis-undecaprenyl diphosphate + beta-D-GlcNAc-(1-&gt;4)-Mur2Ac(oyl-L-Ala-gamma-D-Glu-L-Lys-D-Ala-D-Ala)-di-trans,octa-cis-undecaprenyl diphosphate = [GlcNAc-(1-&gt;4)-Mur2Ac(oyl-L-Ala-gamma-D-Glu-L-Lys-D-Ala-D-Ala)](n+1)-di-trans,octa-cis-undecaprenyl diphosphate + di-trans,octa-cis-undecaprenyl diphosphate + H(+). It functions in the pathway cell wall biogenesis; peptidoglycan biosynthesis. Peptidoglycan polymerase that catalyzes glycan chain elongation from lipid-linked precursors. The protein is Biosynthetic peptidoglycan transglycosylase of Escherichia coli O157:H7.